The primary structure comprises 427 residues: MTSRNQQLFERAQRHIPGGVNSPVRAFRSVGGTPCFFQKGVGAKVQDADGKWYTDYVGSWGPMILGHAHPDVIAAVQAAVVDGLSFGAPTEKEVDIADLLCELVPSMDMVRLVSSGTEATMSAIRLARGHTGRDVLIKFEGCYHGHSDGLLVKAGSGLLTFGNPSSSGVPAGTAETTMVLTYNDPQELADAFAKHGDKIAAVIVEPVVGNMNLIAPTQAFLNAMRDLCTKNGSVLIFDEVMTGFRVGLKSAQGLFGITPDLSTFGKVVGGGMPLGAFGGKREIMEKIAPLGPVYQAGTLSGNPIATAAGLATLKLIQAPGFYEALTAKTKALCDGLVAAAKKHGVAFSAQNIGGMFGLYFAEQCPGTYDEVLACDKEAFNRFFHAMLDAGHYFAPSAFEAGFVSAAHSDADIAGTIAAADAYFASLK.

K266 bears the N6-(pyridoxal phosphate)lysine mark.

It belongs to the class-III pyridoxal-phosphate-dependent aminotransferase family. HemL subfamily. Homodimer. Pyridoxal 5'-phosphate is required as a cofactor.

The protein localises to the cytoplasm. It carries out the reaction (S)-4-amino-5-oxopentanoate = 5-aminolevulinate. Its pathway is porphyrin-containing compound metabolism; protoporphyrin-IX biosynthesis; 5-aminolevulinate from L-glutamyl-tRNA(Glu): step 2/2. In Dechloromonas aromatica (strain RCB), this protein is Glutamate-1-semialdehyde 2,1-aminomutase.